A 1170-amino-acid polypeptide reads, in one-letter code: MILVKANLSLLGGAKKETQFHGSEGKQAAQQKIMVVKPALPWDDHKPRITWRGDGQLFAVSSVCKESGTRKIRVWNRELALQSTSESIEGLEQALSWKPSGALIASSQSKPNKHSVIFFEKNGLVHGEFTLPFTKGQIKVKELLWNSDSTILAIWLEDNEKDESSSGCCVQLWTVGNYHWYLKQSLNFGTDEMKKIECLMWDPENAYRLHVFSTGWHYFCFDWFWGTDHSDGGQGDVAVIDGDKVLVTSFQQAVVPPPMSTYFIQLSCAVNEVTFQLEPKKNSGIAILDSTNILSIYRYGNSTVNDPTVKLGAVSGNGFRTSSQTPKLEKKLRLPRNACDVQLRSFRLLTWVQDDTFLAVSQESNSSISTVHHMNTDQMDGQDINVRDVGTITGHIISLCYSPNTKHCALQTSNGKIWKYLCEYPTPAVEPWIDSMGQEVKFPQPCVQTALASIEGEDMVIGLTERSRLFINNSEVASNITSFHLYEEFLLLTTHSHTCRCVSLRDTSLKALETQLNSASNPNDETIRKVERGSRIITVVPCDTKLILQMPRGNLETIHHRALVLAQIRKWLDRLLFKEAFECMRKLRINLNLLYDHNPKAFLDNVDLFIKQIGSVNYINLFLTEIKEEDVTKTMYPTHALSTMQSSEGAKAKKVDIVCDAVRAAMEKWDPQKFCLSILTSYVRRTIPQLEIALQKVHELRESPSTTIVSADEALKYLLFLVDVNELYDHSLGTYDFDLVVMVAEKSQKDPKEYLPFLNKLKKMETNYQRYTIDKHLKRYKKALSNLSKCGPDYFTEFLSFVKDQSLYTEALELYPHGTVEYKAINAAYGDHLVSKQQYELAGLIYARCNSIEKALDAFIASGNWHQVMCMASQLEYSGEKIAALARTVAGKLVEQRKQADAAVLLEQYAEDYEEAILLLLEGAHWEEALRLIYKYIRLDILETNLKPALLDAQRNHMILFDNQKTTFTRHKERLSVVREMKEKARLGLLDEDVTGCAEADLFSDTSSIMTASDASGKYSQSNSRISSRSSKNRRKAERKKHSLKEGSPLEDLALLEALAETIQMADKLRGDVHNLLKVLILFEYDARAKELQQNFDDLLLLFETSIPEIWPPSVQQNTAAPILGPHSTANSISISYQHQRNVNISMQDSELFTAPKLNKNIQWKLSLLL.

Residues 722–1170 (VDVNELYDHS…NIQWKLSLLL (449 aa)) form a mediates dimerization region. Residues 1014–1045 (DASGKYSQSNSRISSRSSKNRRKAERKKHSLK) form a disordered region. Positions 1018-1030 (KYSQSNSRISSRS) are enriched in low complexity. Positions 1028 to 1046 (SRSSKNRRKAERKKHSLKE) are required for binding to tRNA. Positions 1031–1043 (SKNRRKAERKKHS) are enriched in basic residues.

Belongs to the ELP1/IKA1 family. In terms of assembly, homodimer. Component of the elongator complex.

The protein localises to the cytoplasm. It localises to the nucleus. Its pathway is tRNA modification; 5-methoxycarbonylmethyl-2-thiouridine-tRNA biosynthesis. Functionally, component of the elongator complex which is required for multiple tRNA modifications, including mcm5U (5-methoxycarbonylmethyl uridine), mcm5s2U (5-methoxycarbonylmethyl-2-thiouridine), and ncm5U (5-carbamoylmethyl uridine). The elongator complex catalyzes formation of carboxymethyluridine in the wobble base at position 34 in tRNAs. ELP1 binds to tRNA, mediating interaction of the elongator complex with tRNA. This Xenopus laevis (African clawed frog) protein is Putative elongator complex protein 1 (elp1).